The following is a 505-amino-acid chain: ATP synthase subunit beta, mitochondrial (505 aa).

The N-terminal 31 residues, 1 to 31 (MFALRAASKADKNLLPFLGQLSRSHAAKAAK), are a transit peptide targeting the mitochondrion. 183-190 (GGAGVGKT) serves as a coordination point for ATP.

The protein belongs to the ATPase alpha/beta chains family. As to quaternary structure, F-type ATPases have 2 components, CF(1) - the catalytic core - and CF(0) - the membrane proton channel. CF(1) has five subunits: alpha(3), beta(3), gamma(1), delta(1), epsilon(1). CF(0) has three main subunits: a, b and c.

The protein localises to the mitochondrion. It localises to the mitochondrion inner membrane. The catalysed reaction is ATP + H2O + 4 H(+)(in) = ADP + phosphate + 5 H(+)(out). Functionally, mitochondrial membrane ATP synthase (F(1)F(0) ATP synthase or Complex V) produces ATP from ADP in the presence of a proton gradient across the membrane which is generated by electron transport complexes of the respiratory chain. F-type ATPases consist of two structural domains, F(1) - containing the extramembraneous catalytic core, and F(0) - containing the membrane proton channel, linked together by a central stalk and a peripheral stalk. During catalysis, ATP synthesis in the catalytic domain of F(1) is coupled via a rotary mechanism of the central stalk subunits to proton translocation. Subunits alpha and beta form the catalytic core in F(1). Rotation of the central stalk against the surrounding alpha(3)beta(3) subunits leads to hydrolysis of ATP in three separate catalytic sites on the beta subunits. The protein is ATP synthase subunit beta, mitochondrial of Drosophila melanogaster (Fruit fly).